A 147-amino-acid chain; its full sequence is Hordoindoline-B1 (147 aa).

The N-terminal stretch at 1–19 is a signal peptide; sequence MKTLFLLAILALVASTTFA. Residues 20-28 constitute a propeptide that is removed on maturation; that stretch reads QYSVGGGYN.

In terms of processing, five disulfide bonds are present. In terms of tissue distribution, found in endosperm and aleurone layer of developing kernels, but not in the embryo.

It is found in the membrane. The protein resides in the secreted. The protein localises to the extracellular space. Functionally, acts as a membranotoxin, probably through its antibacterial and antifungal activities, contributing to the defense mechanism of the plant against predators. Forms monovalent cation-selective ion channels in membranes. Contributes to grain texture and hardness. This chain is Hordoindoline-B1 (HINB-1), found in Hordeum vulgare (Barley).